Reading from the N-terminus, the 363-residue chain is Pyrimidine monooxygenase RutA (363 aa).

FMN contacts are provided by residues 49-50 (IK), Asn-115, Glu-124, 140-141 (RY), and Ser-190.

The protein belongs to the NtaA/SnaA/DszA monooxygenase family. RutA subfamily.

The catalysed reaction is uracil + FMNH2 + NADH + O2 = (Z)-3-ureidoacrylate + FMN + NAD(+) + H2O + H(+). It catalyses the reaction thymine + FMNH2 + NADH + O2 = (Z)-2-methylureidoacrylate + FMN + NAD(+) + H2O + H(+). In terms of biological role, catalyzes the pyrimidine ring opening between N-3 and C-4 by an unusual flavin hydroperoxide-catalyzed mechanism, adding oxygen atoms in the process to yield ureidoacrylate peracid, that immediately reacts with FMN forming ureidoacrylate and FMN-N(5)-oxide. The FMN-N(5)-oxide reacts spontaneously with NADH to produce FMN. Requires the flavin reductase RutF to regenerate FMN in vivo. This Klebsiella pneumoniae (strain 342) protein is Pyrimidine monooxygenase RutA.